Consider the following 55-residue polypeptide: Myrmicitoxin(1)-Pr6b (55 aa).

The N-terminal stretch at 1 to 22 (MKIIYAFLLIAVVAFMGSGIMA) is a signal peptide. A propeptide spanning residues 23–29 (ESLAEAI) is cleaved from the precursor.

Belongs to the formicidae venom clade 4 family. In terms of tissue distribution, expressed by the venom gland.

It is found in the secreted. In terms of biological role, probable neurotoxin. The protein is Myrmicitoxin(1)-Pr6b of Pogonomyrmex rugosus (Desert harvester ant).